A 149-amino-acid chain; its full sequence is MVDDAGAAEVLGDEWRPAWSLDRLLRAPLPPPRIRTRPWWFPVQELRDPLVFYLEAWLADAIFGPDRAIIPEIEWMSQVLLTVDVVNSGDLVEISIFGWPRVQNRVKSVLLSLASWHRKHRARAEKMKQLEEFLKTGGTGPQTPEHPVA.

Positions Pro49 to Leu110 constitute a KH; atypical domain.

The protein belongs to the KHDC1 family. In terms of assembly, component of the subcortical maternal complex (SCMC), at least composed of NLRP5, KHDC3, OOEP, and TLE6. Within the complex, interacts with NLRP5, KHDC3 and TLE6. As part of the SCMC interacts with the SCMC-associated protein NLRP4F. The SCMC may facilitate translocation of its components between the nuclear and cytoplasmic compartments. Forms a scaffold complex with KHDC3/FILIA, and interacts with BLM and TRIM25 at DNA replication forks.

The protein resides in the cytoplasm. It is found in the nucleus. Functionally, component of the subcortical maternal complex (SCMC), a multiprotein complex that plays a key role in early embryonic development. The SCMC complex is a structural constituent of cytoplasmic lattices, which consist in fibrous structures found in the cytoplasm of oocytes and preimplantation embryos. They are required to store maternal proteins critical for embryonic development, such as proteins that control epigenetic reprogramming of the preimplantation embryo, and prevent their degradation or activation. As part of the OOEP-KHDC3 scaffold, recruits BLM and TRIM25 to DNA replication forks, thereby promoting the ubiquitination of BLM by TRIM25, enhancing BLM retainment at replication forks and therefore promoting stalled replication fork restart. Positively regulates the homologous recombination-mediated DNA double-strand break (DSB) repair pathway by regulating ATM activation and RAD51 recruitment to DSBs in oocytes. Thereby contributes to oocyte survival and the resumption and completion of meiosis. The polypeptide is Oocyte-expressed protein (OOEP) (Canis lupus familiaris (Dog)).